A 116-amino-acid polypeptide reads, in one-letter code: Large ribosomal subunit protein bL17 (116 aa).

Belongs to the bacterial ribosomal protein bL17 family. As to quaternary structure, part of the 50S ribosomal subunit. Contacts protein L32.

This is Large ribosomal subunit protein bL17 from Fusobacterium nucleatum subsp. nucleatum (strain ATCC 25586 / DSM 15643 / BCRC 10681 / CIP 101130 / JCM 8532 / KCTC 2640 / LMG 13131 / VPI 4355).